Reading from the N-terminus, the 498-residue chain is Probable cytosol aminopeptidase (498 aa).

The Mn(2+) site is built by Lys263 and Asp268. The active site involves Lys275. Asp286, Asp345, and Glu347 together coordinate Mn(2+). The active site involves Arg349.

This sequence belongs to the peptidase M17 family. Mn(2+) is required as a cofactor.

Its subcellular location is the cytoplasm. The enzyme catalyses Release of an N-terminal amino acid, Xaa-|-Yaa-, in which Xaa is preferably Leu, but may be other amino acids including Pro although not Arg or Lys, and Yaa may be Pro. Amino acid amides and methyl esters are also readily hydrolyzed, but rates on arylamides are exceedingly low.. The catalysed reaction is Release of an N-terminal amino acid, preferentially leucine, but not glutamic or aspartic acids.. Its function is as follows. Presumably involved in the processing and regular turnover of intracellular proteins. Catalyzes the removal of unsubstituted N-terminal amino acids from various peptides. This Rhodopseudomonas palustris (strain BisA53) protein is Probable cytosol aminopeptidase.